The primary structure comprises 444 residues: Jacalin-related lectin 11 (444 aa).

Ala-2 carries the post-translational modification N-acetylalanine. Jacalin-type lectin domains follow at residues 2–143, 146–290, and 298–442; these read ALKV…YFIK, SIQS…YYAP, and PEKL…HVTA.

The protein belongs to the jacalin lectin family.

This Arabidopsis thaliana (Mouse-ear cress) protein is Jacalin-related lectin 11 (JAL11).